We begin with the raw amino-acid sequence, 117 residues long: Large ribosomal subunit protein bL19 (117 aa).

This sequence belongs to the bacterial ribosomal protein bL19 family.

In terms of biological role, this protein is located at the 30S-50S ribosomal subunit interface and may play a role in the structure and function of the aminoacyl-tRNA binding site. The chain is Large ribosomal subunit protein bL19 from Colwellia psychrerythraea (strain 34H / ATCC BAA-681) (Vibrio psychroerythus).